The chain runs to 353 residues: Putative ABC transporter ATP-binding protein MG303 homolog (353 aa).

Residues 72 to 312 (LYFYNLSVFV…MQLLQRYEIT (241 aa)) enclose the ABC transporter domain. An ATP-binding site is contributed by 107-114 (GPSGSGKT).

Belongs to the ABC transporter superfamily.

This Mycoplasma pneumoniae (strain ATCC 29342 / M129 / Subtype 1) (Mycoplasmoides pneumoniae) protein is Putative ABC transporter ATP-binding protein MG303 homolog.